Consider the following 88-residue polypeptide: Small ribosomal subunit protein bS20 (88 aa).

The disordered stretch occupies residues 1–23 (MANTSSAKKATRKIARRAAINKN).

The protein belongs to the bacterial ribosomal protein bS20 family.

Functionally, binds directly to 16S ribosomal RNA. The polypeptide is Small ribosomal subunit protein bS20 (Mesorhizobium japonicum (strain LMG 29417 / CECT 9101 / MAFF 303099) (Mesorhizobium loti (strain MAFF 303099))).